A 290-amino-acid polypeptide reads, in one-letter code: Nucleoid occlusion protein (290 aa).

Positions Glu153–Leu172 form a DNA-binding region, H-T-H motif.

The protein belongs to the ParB family.

The protein localises to the cytoplasm. The protein resides in the nucleoid. Its function is as follows. Effects nucleoid occlusion by binding relatively nonspecifically to DNA and preventing the assembly of the division machinery in the vicinity of the nucleoid, especially under conditions that disturb the cell cycle. It helps to coordinate cell division and chromosome segregation by preventing the formation of the Z ring through the nucleoid, which would cause chromosome breakage. This is Nucleoid occlusion protein from Bacillus mycoides (strain KBAB4) (Bacillus weihenstephanensis).